Reading from the N-terminus, the 378-residue chain is 3-dehydroquinate synthase (378 aa).

NAD(+) is bound by residues 115-119 (GVVGD), 139-140 (TS), Lys152, and Lys161. 3 residues coordinate Zn(2+): Glu194, His256, and His275.

It belongs to the sugar phosphate cyclases superfamily. Dehydroquinate synthase family. It depends on Co(2+) as a cofactor. Zn(2+) serves as cofactor. The cofactor is NAD(+).

It localises to the cytoplasm. It carries out the reaction 7-phospho-2-dehydro-3-deoxy-D-arabino-heptonate = 3-dehydroquinate + phosphate. It participates in metabolic intermediate biosynthesis; chorismate biosynthesis; chorismate from D-erythrose 4-phosphate and phosphoenolpyruvate: step 2/7. Its function is as follows. Catalyzes the conversion of 3-deoxy-D-arabino-heptulosonate 7-phosphate (DAHP) to dehydroquinate (DHQ). The protein is 3-dehydroquinate synthase of Brucella anthropi (strain ATCC 49188 / DSM 6882 / CCUG 24695 / JCM 21032 / LMG 3331 / NBRC 15819 / NCTC 12168 / Alc 37) (Ochrobactrum anthropi).